We begin with the raw amino-acid sequence, 276 residues long: Glutamate racemase (276 aa).

Substrate is bound by residues 10–11 (DS) and 42–43 (YG). C74 (proton donor/acceptor) is an active-site residue. 75 to 76 (NT) contacts substrate. C185 functions as the Proton donor/acceptor in the catalytic mechanism. 186-187 (TH) is a substrate binding site.

This sequence belongs to the aspartate/glutamate racemases family.

The enzyme catalyses L-glutamate = D-glutamate. The protein operates within cell wall biogenesis; peptidoglycan biosynthesis. Its function is as follows. Provides the (R)-glutamate required for cell wall biosynthesis. This is Glutamate racemase from Levilactobacillus brevis (Lactobacillus brevis).